A 485-amino-acid chain; its full sequence is Endo-1,4-beta-xylanase C (485 aa).

A signal peptide spans 1–19; sequence MKFLQIIPVLLSLTSTTLA. Residues 34-234 enclose the GH11 domain; that stretch reads KETGNKVGTI…GNGGVSGTAD (201 aa). N-linked (GlcNAc...) asparagine glycosylation is found at Asn-56 and Asn-107. Glu-128 functions as the Nucleophile in the catalytic mechanism. An N-linked (GlcNAc...) asparagine glycan is attached at Asn-175. Glu-221 functions as the Proton donor in the catalytic mechanism. The segment at 250 to 450 is disordered; it reads ASPAPAGGAP…PQNASDGGNC (201 aa). 2 stretches are compositionally biased toward low complexity: residues 265-330 and 344-354; these read AGND…QGQH and GSDFNNWSQGG. 7 tandem repeats follow at residues 275–280, 281–286, 287–292, 293–298, 299–304, 310–315, and 316–321. Positions 275–321 are 7 X 6 AA tandem repeats of G-Q-Q-P-P-Q; sequence GQQPPQGQQPPQGQQPPQGQQPPQGQQPPQGNDQQGQQPPQGQQPPQ. An N-linked (GlcNAc...) asparagine glycan is attached at Asn-349. A run of 8 repeats spans residues 353–361, 362–370, 371–379, 380–388, 389–397, 399–407, 408–416, and 417–425. The 8 X 9 AA tandem repeats of G-G-[SN]-P-W-G-G-N-Q stretch occupies residues 353 to 425; it reads GGSPWGGNQG…QGGNPWGGNQ (73 aa). Residues 355 to 425 show a composition bias toward gly residues; it reads SPWGGNQGGS…QGGNPWGGNQ (71 aa). The segment covering 426 to 445 has biased composition (low complexity); sequence WGAPQNAAAPQSAAAPQNAS. N-linked (GlcNAc...) asparagine glycosylation is present at Asn-443. The CBM1 domain maps to 449–484; the sequence is NCASLWGQCGGQGYNGPSCCSEGSCKPINEYFHQCQ.

The protein belongs to the glycosyl hydrolase 11 (cellulase G) family.

It is found in the secreted. It catalyses the reaction Endohydrolysis of (1-&gt;4)-beta-D-xylosidic linkages in xylans.. The protein operates within glycan degradation; xylan degradation. Endo-1,4-beta-xylanase involved in the hydrolysis of xylan, a major structural heterogeneous polysaccharide found in plant biomass representing the second most abundant polysaccharide in the biosphere, after cellulose. This chain is Endo-1,4-beta-xylanase C (xynC), found in Neocallimastix patriciarum (Rumen fungus).